We begin with the raw amino-acid sequence, 375 residues long: MAGSQIKVPLPKPPDSDSQRLNAFPVIMAQEGKGRLLRQIRLRKILSGDPSDQQITFVNTYGFIRATPETSEFISESSQQEVTPVVTACMLSFGAGPVLEDPQHMLKALDQTDIRVRKTASDKEQILFEINRIPNLFRHHQISADHLIQASSDKYVKAPAKLIAGVNYIYCVTFLSVTVCSASLKFRVARPLLAARSRLVRAVQMEVLLRVTCKKDSQMAKSMLNDPDGEGCIASVWFHLCNLCKGRNKLRSYDENYFASKCRKMNLTVSIGDMWGPTILVHAGGHIPTTAKPFFNSRGWVCHPIHQSSPSLAKTLWSSGCEIKAASAILQGSDYASLAKTDDIIYSKIKVDKDAANYKGVSWSPFRKSASMSNL.

It belongs to the morbillivirus/respirovirus/rubulavirus M protein family.

The protein resides in the virion. Its function is as follows. The M protein has a crucial role in virus assembly and interacts with the RNP complex as well as with the viral membrane. This chain is Matrix protein (M), found in Homo sapiens (Human).